A 333-amino-acid polypeptide reads, in one-letter code: Adenosine deaminase (333 aa).

Positions 12 and 14 each coordinate Zn(2+). 3 residues coordinate substrate: His-14, Asp-16, and Gly-170. His-197 contacts Zn(2+). Glu-200 (proton donor) is an active-site residue. Asp-278 contributes to the Zn(2+) binding site. Position 279 (Asp-279) interacts with substrate.

The protein belongs to the metallo-dependent hydrolases superfamily. Adenosine and AMP deaminases family. Adenosine deaminase subfamily. Zn(2+) serves as cofactor.

It catalyses the reaction adenosine + H2O + H(+) = inosine + NH4(+). The enzyme catalyses 2'-deoxyadenosine + H2O + H(+) = 2'-deoxyinosine + NH4(+). Functionally, catalyzes the hydrolytic deamination of adenosine and 2-deoxyadenosine. This Escherichia coli O157:H7 protein is Adenosine deaminase.